Here is a 687-residue protein sequence, read N- to C-terminus: Protein-glutamine gamma-glutamyltransferase 2 (687 aa).

Alanine 2 is modified (N-acetylalanine). The residue at position 60 (serine 60) is a Phosphoserine. Disulfide bonds link cysteine 230–cysteine 370 and cysteine 370–cysteine 371. Catalysis depends on residues cysteine 277, histidine 335, and aspartate 358. Ca(2+) is bound by residues asparagine 398, aspartate 400, glutamate 437, glutamate 447, and glutamate 452. N6-acetyllysine is present on lysine 468. 476 to 483 (RIRVGQSM) is a binding site for GTP. Ca(2+) is bound at residue glutamate 539. Residue 580–583 (RDLY) participates in GTP binding. An Isoglutamyl lysine isopeptide (Gln-Lys) (interchain with K-?) cross-link involves residue glutamine 633.

The protein belongs to the transglutaminase superfamily. Transglutaminase family. As to quaternary structure, monomer. Interacts with phospholipase C; promoting alpha-1 adrenergic receptor signaling. Interacts with PLCD1. In terms of assembly, homooligomer. Ca(2+) is required as a cofactor. Post-translationally, disulfide bond formation inactivates the calcium-dependent acyltransferase activity. Cys-370 can form disulfide bonds with both Cys-230 and Cys-371: formation of a disulfide bond between Cys-230 and Cys-370 facilitates formation of the disulfide between Cys-370 and Cys-371, which promotes inactivation of the acyltransferase activity. May also form interchain disulfids between Cys-230 and Cys-370. Ca(2+) protects against disulfide bond formation and inactivation. In terms of processing, auto-transglutaminated: Forms covalent cross-links mediated by transglutaminase between Gln-633 and the epsilon-amino group of a lysine residue of itself or HMGB1, forming homopolymers and heteropolymers, respectively. S-nitrosylated, leading to inactivation of the acyltransferase activity.

It localises to the cytoplasm. It is found in the cytosol. Its subcellular location is the nucleus. The protein localises to the chromosome. The protein resides in the secreted. It localises to the extracellular space. It is found in the extracellular matrix. Its subcellular location is the cell membrane. The protein localises to the mitochondrion. The protein resides in the perinuclear region. The enzyme catalyses L-glutaminyl-[protein] + L-lysyl-[protein] = [protein]-L-lysyl-N(6)-5-L-glutamyl-[protein] + NH4(+). The catalysed reaction is L-glutaminyl-[protein] + serotonin = 5-serotonyl-L-glutamyl-[protein] + NH4(+). It catalyses the reaction L-glutaminyl-[protein] + dopamine = 5-dopaminyl-L-glutamyl-[protein] + NH4(+). It carries out the reaction L-glutaminyl-[protein] + histamine = 5-histaminyl-L-glutamyl-[protein] + NH4(+). The enzyme catalyses L-glutaminyl-[protein] + (R)-noradrenaline = 5-(R)-noradrenalinyl-L-glutamyl-[protein] + NH4(+). The catalysed reaction is L-glutaminyl-[protein] + H2O = L-glutamyl-[protein] + NH4(+). With respect to regulation, acyltransferase activity is regulated by the binding of GTP and Ca(2+): inactivated by GTP, which stabilizes its closed structure, thereby obstructing the accessibility of substrates to the active sites. In contrast, Ca(2+) acts as a cofactor by inducing conformational change to the active open form. In absence of Ca(2+), Mg(2+) may bind Ca(2+)-binding sites, promoting GTP-binding and subsequent inhibition of the acyltransferase activity. Extracellularly reduced and activated by CLIC3. Specifically inhibited by compound VA4 ((S)-Benzyl (6-Acrylamido-1-(4-((5-(dimethylamino)naphthalen-1-yl)sulfonyl)piperazin-1-yl)-1-oxohexan-2-yl)carbamate), which specifically abolishes both the transamidation and GTP-binding activities. Functionally, calcium-dependent acyltransferase that catalyzes the formation of covalent bonds between peptide-bound glutamine and various primary amines, such as gamma-amino group of peptide-bound lysine, or mono- and polyamines, thereby producing cross-linked or aminated proteins, respectively. Involved in many biological processes, such as bone development, angiogenesis, wound healing, cellular differentiation, chromatin modification and apoptosis. Acts as a protein-glutamine gamma-glutamyltransferase by mediating the cross-linking of proteins, such as ACO2, HSPB6, FN1, HMGB1, RAP1GDS1, SLC25A4/ANT1, SPP1 and WDR54. Under physiological conditions, the protein cross-linking activity is inhibited by GTP; inhibition is relieved by Ca(2+) in response to various stresses. When secreted, catalyzes cross-linking of proteins of the extracellular matrix, such as FN1 and SPP1 resulting in the formation of scaffolds. Plays a key role during apoptosis, both by (1) promoting the cross-linking of cytoskeletal proteins resulting in condensation of the cytoplasm, and by (2) mediating cross-linking proteins of the extracellular matrix, resulting in the irreversible formation of scaffolds that stabilize the integrity of the dying cells before their clearance by phagocytosis, thereby preventing the leakage of harmful intracellular components. In addition to protein cross-linking, can use different monoamine substrates to catalyze a vast array of protein post-translational modifications: mediates aminylation of serotonin, dopamine, noradrenaline or histamine into glutamine residues of target proteins to generate protein serotonylation, dopaminylation, noradrenalinylation or histaminylation, respectively. Mediates protein serotonylation of small GTPases during activation and aggregation of platelets, leading to constitutive activation of these GTPases. Plays a key role in chromatin organization by mediating serotonylation and dopaminylation of histone H3. Catalyzes serotonylation of 'Gln-5' of histone H3 (H3Q5ser) during serotonergic neuron differentiation, thereby facilitating transcription. Acts as a mediator of neurotransmission-independent role of nuclear dopamine in ventral tegmental area (VTA) neurons: catalyzes dopaminylation of 'Gln-5' of histone H3 (H3Q5dop), thereby regulating relapse-related transcriptional plasticity in the reward system. Regulates vein remodeling by mediating serotonylation and subsequent inactivation of ATP2A2/SERCA2. Also acts as a protein deamidase by mediating the side chain deamidation of specific glutamine residues of proteins to glutamate. Catalyzes specific deamidation of protein gliadin, a component of wheat gluten in the diet. May also act as an isopeptidase cleaving the previously formed cross-links. Also able to participate in signaling pathways independently of its acyltransferase activity: acts as a signal transducer in alpha-1 adrenergic receptor-mediated stimulation of phospholipase C-delta (PLCD) activity and is required for coupling alpha-1 adrenergic agonists to the stimulation of phosphoinositide lipid metabolism. In terms of biological role, has cytotoxic activity: is able to induce apoptosis independently of its acyltransferase activity. This Homo sapiens (Human) protein is Protein-glutamine gamma-glutamyltransferase 2.